Reading from the N-terminus, the 65-residue chain is Large ribosomal subunit protein bL35 (65 aa).

Positions 1–23 are disordered; sequence MPKMKSNRGAAKRFKRTGSGKFK. The span at 10–23 shows a compositional bias: basic residues; the sequence is AAKRFKRTGSGKFK.

This sequence belongs to the bacterial ribosomal protein bL35 family.

This Acidithiobacillus ferrooxidans (strain ATCC 53993 / BNL-5-31) (Leptospirillum ferrooxidans (ATCC 53993)) protein is Large ribosomal subunit protein bL35.